The chain runs to 257 residues: tRNA pseudouridine synthase A (257 aa).

D53 functions as the Nucleophile in the catalytic mechanism. Y111 contacts substrate.

Belongs to the tRNA pseudouridine synthase TruA family. In terms of assembly, homodimer.

The enzyme catalyses uridine(38/39/40) in tRNA = pseudouridine(38/39/40) in tRNA. Functionally, formation of pseudouridine at positions 38, 39 and 40 in the anticodon stem and loop of transfer RNAs. The sequence is that of tRNA pseudouridine synthase A from Xanthomonas campestris pv. campestris (strain 8004).